The following is a 353-amino-acid chain: Methylthioribose-1-phosphate isomerase (353 aa).

Substrate-binding positions include 51–53 (RGA), R94, and Q203. D244 (proton donor) is an active-site residue. 254–255 (NK) contacts substrate.

This sequence belongs to the eIF-2B alpha/beta/delta subunits family. MtnA subfamily.

The catalysed reaction is 5-(methylsulfanyl)-alpha-D-ribose 1-phosphate = 5-(methylsulfanyl)-D-ribulose 1-phosphate. It participates in amino-acid biosynthesis; L-methionine biosynthesis via salvage pathway; L-methionine from S-methyl-5-thio-alpha-D-ribose 1-phosphate: step 1/6. Functionally, catalyzes the interconversion of methylthioribose-1-phosphate (MTR-1-P) into methylthioribulose-1-phosphate (MTRu-1-P). This Trichodesmium erythraeum (strain IMS101) protein is Methylthioribose-1-phosphate isomerase.